Reading from the N-terminus, the 460-residue chain is Cation efflux system protein CusC (460 aa).

The first 17 residues, 1–17 (MSPCKLLPFCVALALTG), serve as a signal peptide directing secretion. Cys18 carries N-palmitoyl cysteine lipidation. The S-diacylglycerol cysteine moiety is linked to residue Cys18.

It belongs to the outer membrane factor (OMF) (TC 1.B.17) family. In terms of assembly, homotrimer. Component of the cus efflux system composed of CusA, CusB, CusC and CusF.

The protein resides in the cell outer membrane. Functionally, forms pores that allow passive diffusion of cations across the outer membrane. Part of a cation efflux system that mediates resistance to copper and silver. In Escherichia coli O6:H1 (strain CFT073 / ATCC 700928 / UPEC), this protein is Cation efflux system protein CusC (cusC).